The sequence spans 109 residues: uncharacterized protein (109 aa).

3 consecutive transmembrane segments (helical) span residues 7-27, 37-57, and 63-83; these read IITI…PFFV, YIRY…VVYC, and ILTG…LGLH.

The protein belongs to the AzlD/HI_1737/HP1330 family.

Its subcellular location is the cell membrane. This is an uncharacterized protein from Haemophilus influenzae (strain ATCC 51907 / DSM 11121 / KW20 / Rd).